Consider the following 172-residue polypeptide: 3-hydroxydecanoyl-[acyl-carrier-protein] dehydratase (172 aa).

Residue His-71 is part of the active site.

The protein belongs to the thioester dehydratase family. FabA subfamily. As to quaternary structure, homodimer.

It localises to the cytoplasm. The catalysed reaction is a (3R)-hydroxyacyl-[ACP] = a (2E)-enoyl-[ACP] + H2O. It catalyses the reaction (3R)-hydroxydecanoyl-[ACP] = (2E)-decenoyl-[ACP] + H2O. The enzyme catalyses (2E)-decenoyl-[ACP] = (3Z)-decenoyl-[ACP]. It functions in the pathway lipid metabolism; fatty acid biosynthesis. Its function is as follows. Necessary for the introduction of cis unsaturation into fatty acids. Catalyzes the dehydration of (3R)-3-hydroxydecanoyl-ACP to E-(2)-decenoyl-ACP and then its isomerization to Z-(3)-decenoyl-ACP. Can catalyze the dehydratase reaction for beta-hydroxyacyl-ACPs with saturated chain lengths up to 16:0, being most active on intermediate chain length. The polypeptide is 3-hydroxydecanoyl-[acyl-carrier-protein] dehydratase (Vibrio parahaemolyticus serotype O3:K6 (strain RIMD 2210633)).